The primary structure comprises 458 residues: Cysteine--tRNA ligase (458 aa).

C27 lines the Zn(2+) pocket. The 'HIGH' region motif lies at 29-39 (MTVYDYMHIGH). C208, H233, and E237 together coordinate Zn(2+). The 'KMSKS' region signature appears at 265–269 (KMSKS). K268 is an ATP binding site.

It belongs to the class-I aminoacyl-tRNA synthetase family. In terms of assembly, monomer. Requires Zn(2+) as cofactor.

It localises to the cytoplasm. It catalyses the reaction tRNA(Cys) + L-cysteine + ATP = L-cysteinyl-tRNA(Cys) + AMP + diphosphate. This is Cysteine--tRNA ligase from Coxiella burnetii (strain Dugway 5J108-111).